The following is a 220-amino-acid chain: Uracil-DNA glycosylase (220 aa).

D65 serves as the catalytic Proton acceptor.

The protein belongs to the uracil-DNA glycosylase (UDG) superfamily. UNG family.

It is found in the cytoplasm. The enzyme catalyses Hydrolyzes single-stranded DNA or mismatched double-stranded DNA and polynucleotides, releasing free uracil.. In terms of biological role, excises uracil residues from the DNA which can arise as a result of misincorporation of dUMP residues by DNA polymerase or due to deamination of cytosine. The polypeptide is Uracil-DNA glycosylase (Phocaeicola vulgatus (strain ATCC 8482 / DSM 1447 / JCM 5826 / CCUG 4940 / NBRC 14291 / NCTC 11154) (Bacteroides vulgatus)).